The primary structure comprises 92 residues: C-C motif chemokine 4 (92 aa).

An N-terminal signal peptide occupies residues 1–23; the sequence is MKLCVTVLSLLVLVAAFCSPALS. Cystine bridges form between Cys-34–Cys-58 and Cys-35–Cys-74.

This sequence belongs to the intercrine beta (chemokine CC) family. In terms of assembly, homodimer. Interacts with CCR5.

It is found in the secreted. In terms of biological role, monokine with inflammatory and chemokinetic properties. The protein is C-C motif chemokine 4 (CCL4) of Sus scrofa (Pig).